The sequence spans 244 residues: Probable transcriptional regulatory protein MMOB1910 (244 aa).

Belongs to the TACO1 family.

The protein localises to the cytoplasm. The sequence is that of Probable transcriptional regulatory protein MMOB1910 from Mycoplasma mobile (strain ATCC 43663 / 163K / NCTC 11711) (Mesomycoplasma mobile).